We begin with the raw amino-acid sequence, 805 residues long: Transcription factor E2f1 (805 aa).

Disordered stretches follow at residues 9–45, 119–208, and 224–255; these read APIN…TTGH, AAAA…LRHD, and PASH…RNRA. Low complexity-rich tracts occupy residues 12–37 and 119–134; these read NNSN…QQHY and AAAA…QLQQ. Composition is skewed to polar residues over residues 144–154 and 181–195; these read RKATGKSNDIT and HHQT…SSAP. Residues 147–161 carry the PIP-box K+4 motif motif; that stretch reads TGKSNDITNYYKVKR. Low complexity predominate over residues 240–249; the sequence is AASVASSSSS. A DNA-binding region spans residues 253–318; it reads NRADTSLGIL…KKSKNNIQWR (66 aa). The dimerization stretch occupies residues 318 to 411; it reads RCGQSMVSQE…LPNTKLPREI (94 aa). A Phosphoserine modification is found at S434. 2 disordered regions span residues 578–650 and 714–743; these read SLTE…QRRS and GAGA…DANS. 2 stretches are compositionally biased toward low complexity: residues 595–615 and 623–636; these read AAAA…NSHN and SNHS…NSKS. Residues 637–647 show a composition bias toward polar residues; sequence QPPTIGYGSSQ.

Belongs to the E2F/DP family. In terms of assembly, heterodimer of E2f and Dp. Cooperates to give sequence-specific DNA binding and optimal trans-activation. Interacts with PCNA. Ubiquitinated by the DCX(DTL) complex, also named CRL4(CDT2) complex, leading to its degradation during S phase. Ubiquitination by the DCX(DTL) complex is essential for cell cycle control and is PCNA-dependent: interacts with PCNA via its PIP-box, while the presence of the containing the 'K+4' motif in the PIP box, recruit the DCX(DTL) complex, leading to its degradation. As to expression, segmentally repeated expression throughout early embryos is restricted to the ventral nerve cord in later embryos.

It is found in the nucleus. Transcriptional activator that binds to E2f sites. Required for wild-type growth in mitotic and polytene tissues, Contributes to the expression of replication genes at the G1-S transition and Cyclin E. Activates cell proliferation in wing imaginal disk, which requires expression of vg. The sequence is that of Transcription factor E2f1 from Drosophila melanogaster (Fruit fly).